We begin with the raw amino-acid sequence, 234 residues long: Aspartate/glutamate leucyltransferase (234 aa).

The protein belongs to the R-transferase family. Bpt subfamily.

The protein resides in the cytoplasm. It catalyses the reaction N-terminal L-glutamyl-[protein] + L-leucyl-tRNA(Leu) = N-terminal L-leucyl-L-glutamyl-[protein] + tRNA(Leu) + H(+). The enzyme catalyses N-terminal L-aspartyl-[protein] + L-leucyl-tRNA(Leu) = N-terminal L-leucyl-L-aspartyl-[protein] + tRNA(Leu) + H(+). Functionally, functions in the N-end rule pathway of protein degradation where it conjugates Leu from its aminoacyl-tRNA to the N-termini of proteins containing an N-terminal aspartate or glutamate. This Hahella chejuensis (strain KCTC 2396) protein is Aspartate/glutamate leucyltransferase.